A 259-amino-acid polypeptide reads, in one-letter code: Thiazole synthase (259 aa).

The Schiff-base intermediate with DXP role is filled by Lys-95. 1-deoxy-D-xylulose 5-phosphate-binding positions include Gly-156, 182–183 (AG), and 204–205 (NT).

The protein belongs to the ThiG family. Homotetramer. Forms heterodimers with either ThiH or ThiS.

The protein resides in the cytoplasm. It carries out the reaction [ThiS sulfur-carrier protein]-C-terminal-Gly-aminoethanethioate + 2-iminoacetate + 1-deoxy-D-xylulose 5-phosphate = [ThiS sulfur-carrier protein]-C-terminal Gly-Gly + 2-[(2R,5Z)-2-carboxy-4-methylthiazol-5(2H)-ylidene]ethyl phosphate + 2 H2O + H(+). The protein operates within cofactor biosynthesis; thiamine diphosphate biosynthesis. Its function is as follows. Catalyzes the rearrangement of 1-deoxy-D-xylulose 5-phosphate (DXP) to produce the thiazole phosphate moiety of thiamine. Sulfur is provided by the thiocarboxylate moiety of the carrier protein ThiS. In vitro, sulfur can be provided by H(2)S. The polypeptide is Thiazole synthase (Proteus mirabilis (strain HI4320)).